The following is a 204-amino-acid chain: uncharacterized protein (204 aa).

A helical transmembrane segment spans residues 160–180 (GLTVAAIASVVVAGAVTYLVV).

To M.pneumoniae MPN_373 C-terminal region.

It localises to the cell membrane. This is an uncharacterized protein from Mycoplasma pneumoniae (strain ATCC 29342 / M129 / Subtype 1) (Mycoplasmoides pneumoniae).